Reading from the N-terminus, the 446-residue chain is Probable rhamnogalacturonase A (446 aa).

The N-terminal stretch at 1-18 (MPALPILALALAPLLVNG) is a signal peptide. A disulfide bond links C39 and C65. N-linked (GlcNAc...) asparagine glycosylation is found at N50, N115, and N124. The active-site Proton donor is D216. C218 and C235 form a disulfide bridge. Residues N236 and N281 are each glycosylated (N-linked (GlcNAc...) asparagine). H291 is a catalytic residue. The N-linked (GlcNAc...) asparagine glycan is linked to N318. 2 cysteine pairs are disulfide-bonded: C341–C347 and C369–C378.

Belongs to the glycosyl hydrolase 28 family.

It is found in the secreted. The enzyme catalyses Endohydrolysis of alpha-D-GalA-(1-&gt;2)-alpha-L-Rha glycosidic bond in the rhamnogalacturonan I backbone with initial inversion of anomeric configuration releasing oligosaccharides with beta-D-GalA at the reducing end.. In terms of biological role, pectinolytic enzymes consist of four classes of enzymes: pectine lyase, polygalacturonase, pectin methylesterase and rhamnogalacturonase. Hydrolyzes alpha-D-galacturonopyranosyl-(1,2)-alpha-L-rhamnopyranosyl linkages in the backbone of the hairy regions of pectins. This is Probable rhamnogalacturonase A (rhgA) from Aspergillus niger (strain ATCC MYA-4892 / CBS 513.88 / FGSC A1513).